Here is a 207-residue protein sequence, read N- to C-terminus: N-(5'-phosphoribosyl)anthranilate isomerase (207 aa).

Belongs to the TrpF family.

It catalyses the reaction N-(5-phospho-beta-D-ribosyl)anthranilate = 1-(2-carboxyphenylamino)-1-deoxy-D-ribulose 5-phosphate. Its pathway is amino-acid biosynthesis; L-tryptophan biosynthesis; L-tryptophan from chorismate: step 3/5. The chain is N-(5'-phosphoribosyl)anthranilate isomerase from Staphylococcus epidermidis (strain ATCC 35984 / DSM 28319 / BCRC 17069 / CCUG 31568 / BM 3577 / RP62A).